The chain runs to 465 residues: Ras GTPase-activating protein-binding protein 1 (465 aa).

Positions 11–133 constitute an NTF2 domain; that stretch reads VGREFVRQYY…FYVHNDIFRY (123 aa). Residues K36, K50, K59, K64, K76, and K123 each participate in a glycyl lysine isopeptide (Lys-Gly) (interchain with G-Cter in ubiquitin) cross-link. Residues 142–224 form an acidic disordered region region; that stretch reads ITEPQEESEE…EPVLEETAPE (83 aa). T143 carries the phosphothreonine modification. Composition is skewed to acidic residues over residues 145–157 and 184–205; these read PQEESEEEVEEPE and EHLEEPVAEPEPEPEPEPEQEP. The segment at 145 to 242 is disordered; sequence PQEESEEEVE…APADIAQTVQ (98 aa). The residue at position 149 (S149) is a Phosphoserine. Residues S230, S231, S249, and S252 each carry the phosphoserine modification. The segment at 254 to 326 is disordered; the sequence is TSKNLPPSGA…PVREAGEQGD (73 aa). Composition is skewed to basic and acidic residues over residues 296–306 and 317–326; these read PQRDQRVREQR and PVREAGEQGD. Positions 339–414 constitute an RRM domain; sequence HQLFIGNLPH…VRLNVEEKKT (76 aa). Residues K352 and K356 each participate in a glycyl lysine isopeptide (Lys-Gly) (interchain with G-Cter in ubiquitin) cross-link. A Phosphoserine modification is found at S372. K375 is covalently cross-linked (Glycyl lysine isopeptide (Lys-Gly) (interchain with G-Cter in ubiquitin)). N6-acetyllysine; alternate is present on K375. Residue K375 forms a Glycyl lysine isopeptide (Lys-Gly) (interchain with G-Cter in SUMO2); alternate linkage. A Glycyl lysine isopeptide (Lys-Gly) (interchain with G-Cter in ubiquitin); alternate cross-link involves residue K392. An RG-rich region region spans residues 409–465; that stretch reads VEEKKTRAAREGDRRDNRLRGPGGPRGGLGGGMRGPPRGGMVQKPGFGVGRSIAPRQ. The span at 412–427 shows a compositional bias: basic and acidic residues; that stretch reads KKTRAAREGDRRDNRL. Positions 412–465 are disordered; the sequence is KKTRAAREGDRRDNRLRGPGGPRGGLGGGMRGPPRGGMVQKPGFGVGRSIAPRQ. R428 carries the asymmetric dimethylarginine modification. The span at 429–446 shows a compositional bias: gly residues; it reads GPGGPRGGLGGGMRGPPR. R434 is modified (asymmetric dimethylarginine; alternate). Omega-N-methylarginine; alternate is present on residues R434, R446, R459, and R464. R459 bears the Dimethylated arginine; alternate mark.

In terms of assembly, homodimer and oligomer. Component of a TAU mRNP complex, at least composed of IGF2BP1, ELAVL4 and G3BP1. Binds to the SH3 domain of Ras GTPase-activating protein (RASA1) in proliferating cells. No interaction in quiescent cells. Interacts (via NTF2 domain) with USP10; inhibiting stress granule formation by lowering G3BP1 valence. Interacts (via NTF2 domain) with CAPRIN1; promoting stress granule formation by lowering the saturation-concentration of G3BP1. Interacts (via NTF2 domain) with UBAP2L; promoting stress granule formation. Associates (via RG-rich region) with 40S ribosome subunits. Interacts with RPTOR and SPAG5; this complex is increased by oxidative stress. Interacts with ATXN2L. Interacts with STYXL1. Interacts with CGAS (via N-terminus); this interaction promotes the DNA-binding and activation of CGAS. Interacts (via C-terminus) with RIGI. Interacts with PABPC1. Interacts with QKI (isoforms QKI6 and QKI7); directing N(7)-methylguanine-containing mRNAs to stress granules. The cofactor is Mg(2+). Phosphorylation of the acidic disordered region regulates stress granule assembly. RASA1-dependent phosphorylation of Ser-149 induces a conformational change that prevents self-association. Dephosphorylation after HRAS activation is required for stress granule assembly. Ser-149 phosphorylation induces partial nuclear localization. In terms of processing, arg-435 is dimethylated, probably to asymmetric dimethylarginine. Post-translationally, ubiquitinated by TRIM21 via 'Lys-63'-linked polyubiquitination in the NTF2 domain in response to heat shock, leading to stress granule disassembly: ubiquitination promotes interaction with the FAF2 adapter, followed by interaction with VCP, which extracts G3BP1 from stress granules, leading to stress granule disassembly. In case of prolonged stress, ubiquitination by TRIM21 leads to autophagy-dependent degradation of G3BP1 via recruitment of ubiquitinated G3BP1 by SQSTM1 and/or CALCOCO2 to autophagosomes.

Its subcellular location is the cytoplasm. The protein resides in the cytosol. It localises to the perikaryon. The protein localises to the stress granule. It is found in the nucleus. The enzyme catalyses ATP + H2O = ADP + phosphate + H(+). Its activity is regulated as follows. Under physiological conditions, G3BP1 adopts a compact state that is stabilized by intramolecular interactions between the RG-rich and the acidic regions that inhibit phase separation. Upon stress, polysomes disassemble and mRNAs are released in an unfolded protein-free state. Binding of unfolded mRNA to G3BP1 outcompetes the intramolecular interactions and RNA-bound G3BP1 adopts an expanded conformation in which the RG-rich region becomes exposed to engage in protein-protein and protein-RNA interactions, allowing physical cross-linking of RNA molecules to form protein-RNA condensates, leading to liquid-liquid phase separation (LLPS). Functionally, protein involved in various processes, such as stress granule formation and innate immunity. Plays an essential role in stress granule formation. Stress granules are membraneless compartments that store mRNAs and proteins, such as stalled translation pre-initiation complexes, in response to stress. Promotes formation of stress granules phase-separated membraneless compartment by undergoing liquid-liquid phase separation (LLPS) upon unfolded RNA-binding: functions as a molecular switch that triggers RNA-dependent LLPS in response to a rise in intracellular free RNA concentrations. Also acts as an ATP- and magnesium-dependent helicase: unwinds DNA/DNA, RNA/DNA, and RNA/RNA substrates with comparable efficiency. Acts unidirectionally by moving in the 5' to 3' direction along the bound single-stranded DNA. Unwinds preferentially partial DNA and RNA duplexes having a 17 bp annealed portion and either a hanging 3' tail or hanging tails at both 5'- and 3'-ends. Plays an essential role in innate immunity by promoting CGAS and RIGI activity. Participates in the DNA-triggered cGAS/STING pathway by promoting the DNA binding and activation of CGAS. Triggers the condensation of cGAS, a process probably linked to the formation of membrane-less organelles. Also enhances RIGI-induced type I interferon production probably by helping RIGI at sensing pathogenic RNA. May also act as a phosphorylation-dependent sequence-specific endoribonuclease in vitro: Cleaves exclusively between cytosine and adenine and cleaves MYC mRNA preferentially at the 3'-UTR. This Bos taurus (Bovine) protein is Ras GTPase-activating protein-binding protein 1 (G3BP1).